We begin with the raw amino-acid sequence, 786 residues long: MTSSYMRLKAAAIAFGVIVATAAVPSPASGREHDGGYAALIRRASYGVPHITADDFGSLGFGVGYVQAEDNICVIAESVVTANGERSRWFGATGPDDADVRTTSSTQAIDDRVAERLLEGPRDGVRAPCDDVRDQMRGFVAGYNHFLRRTGVHRLTDPACRGKAWVRPLSEIDLWRTSWDSMVRAGSGALLDGIVAATPPTAAGPASAPEAPDAAAIAAALDGTSAGIGSNAYGLGAQATVNGSGMVLANPHFPWQGAERFYRMHLKVPGRYDVEGAALIGDPIIEIGHNRTVAWSHTVSTARRFVWHRLSLVPGDPTSYYVDGRPERMRARTVTVQTGSGPVSRTFHDTRYGPVAVVPGTFDWTPATAYAITDVNAGNNRAFDGWLRMGQAKDVRALKAVLDRHQFLPWVNVIAADARGEALYGDHSVVPRVTGALAAACIPAPFQPLYASSGQAVLDGSRSDCALGADPDAAVPGILGPASLPVRFRDDYVTNSNDSHWLASPAAPLEGFPRILGNERTPRSLRTRLGLDQIQQRLAGTDGLPGKGFTTARLWQVMFGNRMHGAELVRDDLVALCRRQPTATASNGAIVDLTAACTALSRFDERADLDSRGAHLFTEFLAGGIRFADTFEVTDPVRTPAPFWNTTDPRVRTALADACNGSPASPSTRSVGDIHTDSRGERRIPIHGGRGEAGTFNVITNPLVPGVGYPQVVHGTSFVMAVELGPHGPSGRQILTYAQSTNPNSPWYADQTVLYSRKGWDTIKYTEAQIAADPNLRVYRVAQRGR.

An N-terminal signal peptide occupies residues 1-22; sequence MTSSYMRLKAAAIAFGVIVATA. A propeptide spanning residues 23–34 is cleaved from the precursor; sequence AVPSPASGREHD. The substrate-binding stretch occupies residues 35–130; the sequence is GGYAALIRRA…PRDGVRAPCD (96 aa). The propeptide at 215–229 is spacer peptide; the sequence is AAIAAALDGTSAGIG. Residues 220–239 are possible recognition-sequence of an AAC processing enzyme; it reads ALDGTSAGIGSNAYGLGAQA. Ser-230 acts as the Nucleophile in catalysis. The tract at residues 658–689 is disordered; it reads ACNGSPASPSTRSVGDIHTDSRGERRIPIHGG. Over residues 672-684 the composition is skewed to basic and acidic residues; it reads GDIHTDSRGERRI.

The protein belongs to the peptidase S45 family. As to quaternary structure, heterodimer of a small subunit and a large subunit processed from the same precursor.

The protein localises to the secreted. Functionally, catalyzes the hydrolysis of the palmitoyl moiety of the antifungal antibiotic, aculeacin-A, giving a hexapeptide moiety and a long chain fatty acid. The sequence is that of Aculeacin-A acylase (aac) from Actinoplanes utahensis.